A 762-amino-acid polypeptide reads, in one-letter code: Acyl-homoserine lactone acylase PvdQ (762 aa).

A signal peptide spans 1–23 (MGMRTVLTGLAGMLLGSMMPVQA). Residues 194–216 (ALSGEQAFQVAEQRRQRFRLERG) constitute a propeptide, spacer peptide. Serine 217 (nucleophile) is an active-site residue.

This sequence belongs to the peptidase S45 family. In terms of assembly, heterodimer of an alpha subunit and a beta subunit processed from the same precursor.

The protein resides in the periplasm. The enzyme catalyses an N-acyl-L-homoserine lactone + H2O = L-homoserine lactone + a carboxylate. Its function is as follows. Catalyzes the deacylation of acyl-homoserine lactone (AHL or acyl-HSL), releasing homoserine lactone (HSL) and the corresponding fatty acid. Possesses a specificity for the degradation of long-chain acyl-HSLs (side chains of 11 to 14 carbons in length). Degrades 3-oxo-C12-HSL, one of the two main AHL signal molecules of P.aeruginosa, and thereby functions as a quorum quencher, inhibiting the las quorum-sensing system. Therefore, may enable P.aeruginosa to modulate its own quorum-sensing-dependent pathogenic potential. Also appears to be required for pyoverdin biosynthesis. The protein is Acyl-homoserine lactone acylase PvdQ (pvdQ) of Pseudomonas aeruginosa (strain ATCC 15692 / DSM 22644 / CIP 104116 / JCM 14847 / LMG 12228 / 1C / PRS 101 / PAO1).